The chain runs to 488 residues: UDP-N-acetylmuramoyl-L-alanyl-D-glutamate--2,6-diaminopimelate ligase (488 aa).

Residues Leu24, Ser26, and 41–43 (HQV) each bind UDP-N-acetyl-alpha-D-muramoyl-L-alanyl-D-glutamate. 113–119 (GTNGKTT) provides a ligand contact to ATP. Residues Asn154, 155 to 156 (TT), Ser182, Gln188, and Arg190 each bind UDP-N-acetyl-alpha-D-muramoyl-L-alanyl-D-glutamate. N6-carboxylysine is present on Lys222. Meso-2,6-diaminopimelate is bound by residues Arg386, 410 to 413 (DNPR), Gly461, and Glu465. A Meso-diaminopimelate recognition motif motif is present at residues 410–413 (DNPR).

Belongs to the MurCDEF family. MurE subfamily. The cofactor is Mg(2+). In terms of processing, carboxylation is probably crucial for Mg(2+) binding and, consequently, for the gamma-phosphate positioning of ATP.

The protein resides in the cytoplasm. The enzyme catalyses UDP-N-acetyl-alpha-D-muramoyl-L-alanyl-D-glutamate + meso-2,6-diaminopimelate + ATP = UDP-N-acetyl-alpha-D-muramoyl-L-alanyl-gamma-D-glutamyl-meso-2,6-diaminopimelate + ADP + phosphate + H(+). It functions in the pathway cell wall biogenesis; peptidoglycan biosynthesis. In terms of biological role, catalyzes the addition of meso-diaminopimelic acid to the nucleotide precursor UDP-N-acetylmuramoyl-L-alanyl-D-glutamate (UMAG) in the biosynthesis of bacterial cell-wall peptidoglycan. This Haemophilus influenzae (strain PittEE) protein is UDP-N-acetylmuramoyl-L-alanyl-D-glutamate--2,6-diaminopimelate ligase.